We begin with the raw amino-acid sequence, 56 residues long: Prokaryotic ubiquitin-like protein UBact (56 aa).

Residues 1-56 (MPERIVKPMPQDPVTKPGDEGPRTPNVPKPDTERLLERMRRVDPRQAQRYRQRSGE) form a disordered region. Residues 30 to 46 (PDTERLLERMRRVDPRQ) show a composition bias toward basic and acidic residues. E56 participates in a covalent cross-link: Isoglutamyl lysine isopeptide (Glu-Lys) (interchain with K-? in acceptor proteins).

The protein belongs to the ubiquitin-like protein UBact family.

May function as a protein modifier covalently attached to lysine residues of substrate proteins. This may serve to target the modified proteins for degradation by proteasomes. This Acetithermum autotrophicum protein is Prokaryotic ubiquitin-like protein UBact.